The primary structure comprises 382 residues: Galactokinase (382 aa).

Substrate is bound at residue 34–37 (EHTD). 124–130 (GAGLSSS) contributes to the ATP binding site. 2 residues coordinate Mg(2+): Ser130 and Glu162. Asp174 acts as the Proton acceptor in catalysis. A substrate-binding site is contributed by Tyr223.

This sequence belongs to the GHMP kinase family. GalK subfamily.

The protein resides in the cytoplasm. The enzyme catalyses alpha-D-galactose + ATP = alpha-D-galactose 1-phosphate + ADP + H(+). The protein operates within carbohydrate metabolism; galactose metabolism. Its function is as follows. Catalyzes the transfer of the gamma-phosphate of ATP to D-galactose to form alpha-D-galactose-1-phosphate (Gal-1-P). This Shigella flexneri protein is Galactokinase.